The sequence spans 426 residues: Enolase (426 aa).

Gln-163 contacts (2R)-2-phosphoglycerate. Glu-205 (proton donor) is an active-site residue. 3 residues coordinate Mg(2+): Asp-242, Glu-286, and Asp-313. Residues Lys-338, Arg-367, Ser-368, and Lys-389 each coordinate (2R)-2-phosphoglycerate. Residue Lys-338 is the Proton acceptor of the active site.

It belongs to the enolase family. The cofactor is Mg(2+).

The protein localises to the cytoplasm. It is found in the secreted. The protein resides in the cell surface. The catalysed reaction is (2R)-2-phosphoglycerate = phosphoenolpyruvate + H2O. It functions in the pathway carbohydrate degradation; glycolysis; pyruvate from D-glyceraldehyde 3-phosphate: step 4/5. In terms of biological role, catalyzes the reversible conversion of 2-phosphoglycerate (2-PG) into phosphoenolpyruvate (PEP). It is essential for the degradation of carbohydrates via glycolysis. In Gemmatimonas aurantiaca (strain DSM 14586 / JCM 11422 / NBRC 100505 / T-27), this protein is Enolase.